Consider the following 124-residue polypeptide: Small ribosomal subunit protein uS13 (124 aa).

The interval 95–124 (GLPVRGQRTKTNARTRKGPKRTIAGKKKAR) is disordered.

It belongs to the universal ribosomal protein uS13 family. Part of the 30S ribosomal subunit. Forms a loose heterodimer with protein S19. Forms two bridges to the 50S subunit in the 70S ribosome.

Functionally, located at the top of the head of the 30S subunit, it contacts several helices of the 16S rRNA. In the 70S ribosome it contacts the 23S rRNA (bridge B1a) and protein L5 of the 50S subunit (bridge B1b), connecting the 2 subunits; these bridges are implicated in subunit movement. Contacts the tRNAs in the A and P-sites. The polypeptide is Small ribosomal subunit protein uS13 (Mycobacteroides abscessus (strain ATCC 19977 / DSM 44196 / CCUG 20993 / CIP 104536 / JCM 13569 / NCTC 13031 / TMC 1543 / L948) (Mycobacterium abscessus)).